The chain runs to 1514 residues: Mitogen-activated protein kinase-binding protein 1 (1514 aa).

Ala2 is subject to N-acetylalanine. WD repeat units lie at residues 88–129 (SSRK…QVAE), 132–173 (EHKY…VVAS), 175–213 (KVSSRVTAVSFSEDCSYFVTAGNRHIKFWYLDDSKTSKV), 276–315 (DSFTTTVAHCISVSQDYIFCGCADGTVRLFNPSNLHFLST), 342–381 (ARYPDTIALTFDPTNQWLSCVYNDHSIYVWDVRDPKKVGK), 387–436 (YHSS…VHGS), 477–516 (DPRVGIRSVCVSPNGQHLASGDRMGTLRVHELQSLSEMLK), 519–561 (AHDS…SLQQ), 565–606 (EHSS…DGVQ), 614–653 (VRKTTLYDMDVEPSWKYTAIGCQDRNIRIFNISSGKQKKL), 659–698 (GEDGTLIKVQTDPSGIYIATSCSDKNLSIFDFSSGECVAT), and 701–740 (GHSEIVTGMKFSNDCKHLISVSGDSCIFVWRLSSEMTISM). Disordered stretches follow at residues 748–804 (RQRQ…PALP), 880–925 (PSLQ…SQPC), 951–1256 (EDGI…SSMA), and 1299–1336 (DIPKPLPDRPTLAAFSPVTKGRAPGEAEKPGFPVGLGK). Residues 789–800 (KEGEDEGTEEEL) are compositionally biased toward acidic residues. Composition is skewed to polar residues over residues 905–925 (LETSLTSQNEKPPRPQASQPC) and 961–971 (DNPTMDTSEFQ). A compositionally biased stretch (low complexity) spans 996–1011 (DSACSVDYSSSCLSSP). Acidic residues predominate over residues 1032-1048 (DLEEPAEGDEEEEEEEG). The span at 1113-1126 (PSPSSSSLALMSRP) shows a compositional bias: low complexity. 2 stretches are compositionally biased toward polar residues: residues 1188–1200 (SPFSGLQKAQSVH) and 1245–1256 (HSYQNPTTSSMA). Ser1198 carries the phosphoserine modification.

In terms of assembly, can form homodimers (via C-terminus). Interacts (via C-terminus) with WDR62 (via C-terminus). Interacts with MAPK9. Interacts (via N-terminus) with NOD2; the interaction is enhanced in presence of muramyl dipeptide (MDP). Interacts with MAPK10. In terms of tissue distribution, expressed in intestinal mucosa, where it is detected in epithelial cells, endothelial cells, smooth muscle cells and immune cells, such as lymphocytes. Expressed in kidney.

Its subcellular location is the cytoplasm. The protein localises to the nucleus. It localises to the cytoskeleton. It is found in the spindle pole. Its function is as follows. Negative regulator of NOD2 function. It down-regulates NOD2-induced processes such as activation of NF-kappa-B signaling, IL8 secretion and antibacterial response. Involved in JNK signaling pathway. This chain is Mitogen-activated protein kinase-binding protein 1 (MAPKBP1), found in Homo sapiens (Human).